The primary structure comprises 247 residues: uncharacterized protein (247 aa).

Residues 200-225 (SGKYSELKTKVNDIENDLRTLSSNTN) adopt a coiled-coil conformation.

This is an uncharacterized protein from Acanthamoeba polyphaga (Amoeba).